A 240-amino-acid chain; its full sequence is Protein YIPF6 (240 aa).

At 1–91 (MVVSHLNRTV…PKKSSALLRD (91 aa)) the chain is on the cytoplasmic side. A helical transmembrane segment spans residues 92-112 (WDLWGPLLLCVTLALMLQGGS). Topologically, residues 113 to 125 (ADSEEDGRPQFAE) are lumenal. The chain crosses the membrane as a helical span at residues 126–146 (VFVIIWFGSVIITLNSKLLGG). Residues 147–149 (TIS) are Cytoplasmic-facing. A helical membrane pass occupies residues 150–170 (FFQSLCVLGYCILPLTVAMIV). The Lumenal portion of the chain corresponds to 171–172 (CR). Residues 173–193 (IVLLGGSGVVSFAVRLIVVTA) form a helical membrane-spanning segment. Over 194–215 (SFSWSTFASTAFLADSQPTNRK) the chain is Cytoplasmic. Residues 216-236 (ALVVYPVFLFYFVIGWMILTF) traverse the membrane as a helical segment. The Lumenal portion of the chain corresponds to 237–240 (SPSH).

The protein belongs to the YIP1 family.

The protein resides in the golgi apparatus membrane. The polypeptide is Protein YIPF6 (yipf6) (Danio rerio (Zebrafish)).